We begin with the raw amino-acid sequence, 591 residues long: MNQGKIITVSGPLVVASGMQEANIQDICRVGHLGLVGEIIEMRRDQASIQVYEETSGIGPGEPVVTTGCPLSVELGPGLISEMFDGIQRPLDRFQKATDSDFLIRGVAIPSLDRKAKWAFIPKLSVGQEVVAGDILGTVQETAVIEHRIMVPYKVSGTLVAIHAGDFTVTDTVYEIKQEDGSIYQGSLMQTWPVRQSRPVAQKLIPVEPLVTGQRVIDTFFPVTKGGAAAVPGPFGAGKTVVQHQIAKFANVDIVIYVGCGERGNEMTDVLNEFPELIDPNTGQSIMERTVLIANTSNMPVAAREASIYTGITIAEYFRDMGYSVAIMADSTSRWAEALREMSGRLQEMPGDEGYPAYLGSRIAEYYERAGRVRTLGSQEREGTITAIGAVSPPGGDISEPVTQNTLRIIKVFWGLDAPLAQRRHFPAINWLTSYSLYQDDVGSYIDRKQESNWSNKVTRAMAILQREASLEEIVRLVGLDSLSEQDRLTMAVARQIREDYLQQNAFDSVDTFTSFPKQEAMLTNILTFNEEASKALSLGAYFNEIMEGTAQVRDRIARSKFIPEENLEQIKGLTQKVTKEIHHVLAKGGI.

233–240 serves as a coordination point for ATP; it reads GPFGAGKT.

It belongs to the ATPase alpha/beta chains family.

The catalysed reaction is ATP + H2O + 4 H(+)(in) = ADP + phosphate + 5 H(+)(out). In terms of biological role, produces ATP from ADP in the presence of a proton gradient across the membrane. The V-type alpha chain is a catalytic subunit. In Streptococcus pyogenes serotype M3 (strain ATCC BAA-595 / MGAS315), this protein is V-type ATP synthase alpha chain.